We begin with the raw amino-acid sequence, 304 residues long: tRNA pseudouridine synthase B (304 aa).

The Nucleophile role is filled by aspartate 40.

This sequence belongs to the pseudouridine synthase TruB family. Type 1 subfamily.

It carries out the reaction uridine(55) in tRNA = pseudouridine(55) in tRNA. Functionally, responsible for synthesis of pseudouridine from uracil-55 in the psi GC loop of transfer RNAs. This chain is tRNA pseudouridine synthase B, found in Halalkalibacterium halodurans (strain ATCC BAA-125 / DSM 18197 / FERM 7344 / JCM 9153 / C-125) (Bacillus halodurans).